The sequence spans 1007 residues: Lysosomal alpha-mannosidase (1007 aa).

Low complexity-rich tracts occupy residues 1 to 10 and 19 to 28; these read MGADARPLGV and AARPGTSSRA. Residues 1–30 are disordered; sequence MGADARPLGVRAGGGGRGAARPGTSSRALP. The N-terminal stretch at 1 to 50 is a signal peptide; the sequence is MGADARPLGVRAGGGGRGAARPGTSSRALPPPLPPLSFLLLLLAAPGARA. 2 disulfide bridges follow: C56/C360 and C269/C274. Residues H73 and D75 each contribute to the Zn(2+) site. N134 is a glycosylation site (N-linked (GlcNAc...) asparagine). A Zn(2+)-binding site is contributed by D197. D197 acts as the Nucleophile in catalysis. N-linked (GlcNAc...) asparagine glycans are attached at residues N311, N347, and N369. 2 disulfides stabilise this stretch: C414–C474 and C495–C503. H448 is a binding site for Zn(2+). Residues N499, N543, N643, N649, N690, N764, and N927 are each glycosylated (N-linked (GlcNAc...) asparagine).

This sequence belongs to the glycosyl hydrolase 38 family. Requires Zn(2+) as cofactor. Post-translationally, processed into 3 peptides of 72 kDa, 41 kDa and 12 kDa.

It is found in the lysosome. The catalysed reaction is Hydrolysis of terminal, non-reducing alpha-D-mannose residues in alpha-D-mannosides.. Necessary for the catabolism of N-linked carbohydrates released during glycoprotein turnover. The polypeptide is Lysosomal alpha-mannosidase (MAN2B1) (Felis catus (Cat)).